We begin with the raw amino-acid sequence, 211 residues long: Peroxiredoxin (211 aa).

The Thioredoxin domain maps to 2 to 156 (PLIGDKFPEM…IVRMIRAFRV (155 aa)). The active-site Cysteine sulfenic acid (-SOH) intermediate is the Cys44. A substrate-binding site is contributed by Arg119. Cys198 and Cys204 are joined by a disulfide.

This sequence belongs to the peroxiredoxin family. Prx6 subfamily. As to quaternary structure, homodecamer. Pentamer of dimers that assemble into a ring structure.

It is found in the cytoplasm. It catalyses the reaction a hydroperoxide + [thioredoxin]-dithiol = an alcohol + [thioredoxin]-disulfide + H2O. Thiol-specific peroxidase that catalyzes the reduction of hydrogen peroxide and organic hydroperoxides to water and alcohols, respectively. Plays a role in cell protection against oxidative stress by detoxifying peroxides. This chain is Peroxiredoxin, found in Methanothermobacter marburgensis (strain ATCC BAA-927 / DSM 2133 / JCM 14651 / NBRC 100331 / OCM 82 / Marburg) (Methanobacterium thermoautotrophicum).